Consider the following 880-residue polypeptide: Leucine--tRNA ligase (880 aa).

The 'HIGH' region signature appears at 46–56; it reads PYPSGALHMGH. Residues 638-642 carry the 'KMSKS' region motif; sequence KMSKS. K641 contacts ATP.

The protein belongs to the class-I aminoacyl-tRNA synthetase family.

It localises to the cytoplasm. The catalysed reaction is tRNA(Leu) + L-leucine + ATP = L-leucyl-tRNA(Leu) + AMP + diphosphate. This is Leucine--tRNA ligase from Xanthomonas oryzae pv. oryzae (strain MAFF 311018).